A 471-amino-acid chain; its full sequence is Major facilitator-type transporter psiT1 (471 aa).

The segment at 1–36 (MNPTTATDAHERTSLLSGRPQSAANSTAPYERQVQP) is disordered. Over residues 14–36 (SLLSGRPQSAANSTAPYERQVQP) the composition is skewed to polar residues. An N-linked (GlcNAc...) asparagine glycan is attached at Asn-25. 8 helical membrane-spanning segments follow: residues 44–64 (TPVTVITIITLIYRLATTMVI), 108–128 (AIMVSMTTVIDGLGGILGTGI), 140–160 (PVLMFLLSCTMIDHLAILTVQ), 168–188 (LVTFGLIMIVETIGNENTTVF), 212–232 (GWLVLGGALAYSIGGSITTFL), 237–257 (AVYIVSFSVTGIVLTFTAFVL), 322–342 (LHSFIVTLADAYALPAMLIFF), and 356–376 (VMTTYSVSSVFVLAIALPLFI). A glycan (N-linked (GlcNAc...) asparagine) is linked at Asn-384. A helical transmembrane segment spans residues 424–444 (VHITVISWTIESLAYIVLGTV).

It belongs to the major facilitator superfamily. TCR/Tet family.

It is found in the membrane. Major facilitator-type transporter; part of the gene cluster that mediates the biosynthesis of psilocybin, a psychotropic tryptamine-derived natural product. The protein is Major facilitator-type transporter psiT1 of Psilocybe cyanescens.